A 414-amino-acid chain; its full sequence is Serine hydroxymethyltransferase (414 aa).

(6S)-5,6,7,8-tetrahydrofolate is bound by residues Leu-121 and 125-127 (GHL). Lys-229 is modified (N6-(pyridoxal phosphate)lysine).

The protein belongs to the SHMT family. Homodimer. The cofactor is pyridoxal 5'-phosphate.

It localises to the cytoplasm. The catalysed reaction is (6R)-5,10-methylene-5,6,7,8-tetrahydrofolate + glycine + H2O = (6S)-5,6,7,8-tetrahydrofolate + L-serine. It functions in the pathway one-carbon metabolism; tetrahydrofolate interconversion. The protein operates within amino-acid biosynthesis; glycine biosynthesis; glycine from L-serine: step 1/1. Its function is as follows. Catalyzes the reversible interconversion of serine and glycine with tetrahydrofolate (THF) serving as the one-carbon carrier. This reaction serves as the major source of one-carbon groups required for the biosynthesis of purines, thymidylate, methionine, and other important biomolecules. Also exhibits THF-independent aldolase activity toward beta-hydroxyamino acids, producing glycine and aldehydes, via a retro-aldol mechanism. The chain is Serine hydroxymethyltransferase from Acidovorax ebreus (strain TPSY) (Diaphorobacter sp. (strain TPSY)).